Consider the following 212-residue polypeptide: Anaphase-promoting complex subunit 10 (212 aa).

The region spanning 12–196 (MDEEERTSSR…PSAVLEARPG (185 aa)) is the DOC domain.

It belongs to the APC10 family. In terms of assembly, the APC/C complex is probably composed of at least 12 subunits: apc-2, apc-10, apc-11, cdc-26, emb-1, emb-27, emb-30, mat-1, mat-2, mat-3, such-1 and gfi-3.

It functions in the pathway protein modification; protein ubiquitination. Its function is as follows. Probable component of the anaphase promoting complex/cyclosome (APC/C), a cell cycle-regulated E3 ubiquitin ligase that controls progression through mitosis and the G1 phase of the cell cycle. The APC/C complex acts by mediating ubiquitination and subsequent degradation of target proteins. This Caenorhabditis elegans protein is Anaphase-promoting complex subunit 10.